The sequence spans 101 residues: MFVKTGDTVKVIAGKDRGTTGKVIKALPKVNKVVVEGVAIMKKHQKPNSENPSGAILEIEAPIHVSNVQVLDKNGVAGRVGYKVVDDKKVRFNKKSGEILD.

It belongs to the universal ribosomal protein uL24 family. Part of the 50S ribosomal subunit.

In terms of biological role, one of two assembly initiator proteins, it binds directly to the 5'-end of the 23S rRNA, where it nucleates assembly of the 50S subunit. One of the proteins that surrounds the polypeptide exit tunnel on the outside of the subunit. This Lactococcus lactis subsp. lactis (strain IL1403) (Streptococcus lactis) protein is Large ribosomal subunit protein uL24.